A 640-amino-acid chain; its full sequence is 1,4-alpha-glucan branching enzyme GlgB (640 aa).

Aspartate 317 (nucleophile) is an active-site residue. Catalysis depends on glutamate 370, which acts as the Proton donor.

The protein belongs to the glycosyl hydrolase 13 family. GlgB subfamily. Monomer.

It carries out the reaction Transfers a segment of a (1-&gt;4)-alpha-D-glucan chain to a primary hydroxy group in a similar glucan chain.. It participates in glycan biosynthesis; glycogen biosynthesis. Its function is as follows. Catalyzes the formation of the alpha-1,6-glucosidic linkages in glycogen by scission of a 1,4-alpha-linked oligosaccharide from growing alpha-1,4-glucan chains and the subsequent attachment of the oligosaccharide to the alpha-1,6 position. The protein is 1,4-alpha-glucan branching enzyme GlgB of Nitratidesulfovibrio vulgaris (strain DP4) (Desulfovibrio vulgaris).